A 456-amino-acid chain; its full sequence is Proline--tRNA ligase (456 aa).

This sequence belongs to the class-II aminoacyl-tRNA synthetase family. ProS type 3 subfamily. Homodimer.

It localises to the cytoplasm. The catalysed reaction is tRNA(Pro) + L-proline + ATP = L-prolyl-tRNA(Pro) + AMP + diphosphate. Functionally, catalyzes the attachment of proline to tRNA(Pro) in a two-step reaction: proline is first activated by ATP to form Pro-AMP and then transferred to the acceptor end of tRNA(Pro). This chain is Proline--tRNA ligase, found in Methanococcus aeolicus (strain ATCC BAA-1280 / DSM 17508 / OCM 812 / Nankai-3).